We begin with the raw amino-acid sequence, 684 residues long: MKTNIINTWHSFVNIPNVIVPAIEKEIRRMENGACSSFSDDDNGSLSEESENEDSFFRSNSYKRRGPSQREQHLPGTMALFNVNNSSNKDQEPKEKKKKKKEKKSKADDKNENKKDPEKKKKKEKEKEKKKKEEKTKEKKEEEKKEVVVIDPSGNTYYNWLFCITLPVMYNWTMIIARACFDELQSDYLEYWLIFDYVSDVVYLADMFVRTRTGYLEQGLLVKDRMKLIEKYKANLQFKLDVLSVIPTDLLYIKFGWNYPEIRLNRLLRISRMFEFFQRTETRTNYPNIFRISNLVMYIVIIIHWNACVYYSISKAIGFGNDTWVYPDVNDPEFGRLARKYVYSLYWSTLTLTTIGETPPPVLDSEYIFVVVDFLIGVLIFATIVGNIGSMISNMNAARAEFQSRVDAIKQYMNFRNVSKDMEKRVIKWFDYLWTNKKTVDEREVLRYLPDKLRAEIAINVHLDTLKKVRIFADCEAGLLVELVLKLQPQVYSPGDYICKKGDIGREMYIIKEGKLAVVADDGITQFVVLSDGSYFGEISILNIKGSKAGNRRTANIKSIGYSDLFCLSKDDLMEALTEYPDAKTMLEEKGRQILMKDGLLDINIANMGSDPKDLEEKVTRMEGSVDLLQTRFARILAEYESMQQKLKQRLTKVEKFLKPLIETEFSALEEPGGESELTESLQD.

Topologically, residues 1 to 161 (MKTNIINTWH…PSGNTYYNWL (161 aa)) are cytoplasmic. The interval 34–145 (ACSSFSDDDN…TKEKKEEEKK (112 aa)) is disordered. A compositionally biased stretch (acidic residues) spans 39 to 54 (SDDDNGSLSEESENED). The segment covering 105 to 145 (SKADDKNENKKDPEKKKKKEKEKEKKKKEEKTKEKKEEEKK) has biased composition (basic and acidic residues). Residues 162-183 (FCITLPVMYNWTMIIARACFDE) form a helical membrane-spanning segment. Residues 184-193 (LQSDYLEYWL) lie on the Extracellular side of the membrane. Residues 194 to 214 (IFDYVSDVVYLADMFVRTRTG) traverse the membrane as a helical segment. The Cytoplasmic portion of the chain corresponds to 215-239 (YLEQGLLVKDRMKLIEKYKANLQFK). The chain crosses the membrane as a helical span at residues 240–258 (LDVLSVIPTDLLYIKFGWN). The Extracellular portion of the chain corresponds to 259–263 (YPEIR). Residues 264–282 (LNRLLRISRMFEFFQRTET) traverse the membrane as a helical segment. The Cytoplasmic segment spans residues 283-289 (RTNYPNI). Positions 287–395 (PNIFRISNLV…GNIGSMISNM (109 aa)) are ion conduction pathway. A helical membrane pass occupies residues 290 to 313 (FRISNLVMYIVIIIHWNACVYYSI). Topologically, residues 314-336 (SKAIGFGNDTWVYPDVNDPEFGR) are extracellular. The N-linked (GlcNAc...) asparagine glycan is linked to N321. The next 2 helical transmembrane spans lie at 337-371 (LARKYVYSLYWSTLTLTTIGETPPPVLDSEYIFVV) and 372-396 (VDFLIGVLIFATIVGNIGSMISNMN). The selectivity filter stretch occupies residues 354-357 (TIGE). The segment at 397–473 (AARAEFQSRV…DTLKKVRIFA (77 aa)) is C-linker. The Cytoplasmic segment spans residues 397 to 684 (AARAEFQSRV…ESELTESLQD (288 aa)). The tract at residues 477–597 (AGLLVELVLK…EEKGRQILMK (121 aa)) is cyclic nucleotide-binding domain. The 3',5'-cyclic GMP site is built by G537, S540, R553, and T554. Positions 553 and 554 each coordinate 3',5'-cyclic AMP. A coiled-coil region spans residues 615 to 669 (LEEKVTRMEGSVDLLQTRFARILAEYESMQQKLKQRLTKVEKFLKPLIETEFSAL).

The protein belongs to the cyclic nucleotide-gated cation channel (TC 1.A.1.5) family. CNGA1 subfamily. In terms of assembly, forms heterotetrameric channels composed of CNGA1 and CNGB1 subunits with 3:1 stoichiometry. May also form cyclic nucleotide-activated homotetrameric channels, that are efficiently activated by saturating cGMP, but poorly activated by saturating cAMP compared to the heterotetramer with CNGB1. The channel binds Ca(2+)-bound CALM1 via CaM1 and CaM2 regions of the CNGB1 subunit; this interaction modulates the affinity of the channel for cNMPs in response to intracellular Ca(2+) levels. As to expression, rod cells in the retina and inner medulla of kidney.

The protein localises to the cell membrane. It carries out the reaction Ca(2+)(in) = Ca(2+)(out). The catalysed reaction is Na(+)(in) = Na(+)(out). The enzyme catalyses K(+)(in) = K(+)(out). It catalyses the reaction NH4(+)(in) = NH4(+)(out). It carries out the reaction Rb(+)(in) = Rb(+)(out). The catalysed reaction is Li(+)(in) = Li(+)(out). The enzyme catalyses Cs(+)(in) = Cs(+)(out). In terms of biological role, pore-forming subunit of the rod cyclic nucleotide-gated channel. Mediates rod photoresponses at dim light converting transient changes in intracellular cGMP levels into electrical signals. In the dark, cGMP levels are high and keep the channel open enabling a steady inward current carried by Na(+) and Ca(2+) ions that leads to membrane depolarization and neurotransmitter release from synaptic terminals. Upon photon absorption cGMP levels decline leading to channel closure and membrane hyperpolarization that ultimately slows neurotransmitter release and signals the presence of light, the end point of the phototransduction cascade. Conducts cGMP- and cAMP-gated ion currents, with permeability for monovalent and divalent cations. The selectivity for Ca(2+) over Na(+) increases with cGMP concentrations, whereas the selectivity among monovalent ions is independent of the cGMP levels. The sequence is that of Cyclic nucleotide-gated channel alpha-1 (Cnga1) from Mus musculus (Mouse).